We begin with the raw amino-acid sequence, 284 residues long: Tropomyosin (284 aa).

Residues 1–284 (MEAIKNKMQA…DQTFAELTGY (284 aa)) adopt a coiled-coil conformation. The interval 22-43 (AEIAEQKSRDANLRAEKSEEEV) is disordered.

This sequence belongs to the tropomyosin family. In terms of assembly, homodimer.

Functionally, tropomyosin, in association with the troponin complex, plays a central role in the calcium dependent regulation of muscle contraction. This Lepidoglyphus destructor (Storage mite) protein is Tropomyosin.